A 352-amino-acid chain; its full sequence is Glycerol-1-phosphate dehydrogenase [NAD(P)+] (352 aa).

Residues 99 to 103 (GKSID) and 121 to 124 (TVAS) each bind NAD(+). Residue aspartate 126 coordinates substrate. Serine 130 is an NAD(+) binding site. Substrate is bound at residue aspartate 173. Zn(2+) is bound by residues aspartate 173 and histidine 253. A substrate-binding site is contributed by histidine 257. Histidine 269 lines the Zn(2+) pocket.

It belongs to the glycerol-1-phosphate dehydrogenase family. Homodimer. Zn(2+) serves as cofactor.

It localises to the cytoplasm. It carries out the reaction sn-glycerol 1-phosphate + NAD(+) = dihydroxyacetone phosphate + NADH + H(+). The enzyme catalyses sn-glycerol 1-phosphate + NADP(+) = dihydroxyacetone phosphate + NADPH + H(+). The protein operates within membrane lipid metabolism; glycerophospholipid metabolism. Its activity is regulated as follows. Totally inhibited by EDTA in vitro. In terms of biological role, catalyzes the NAD(P)H-dependent reduction of dihydroxyacetonephosphate (DHAP or glycerone phosphate) to glycerol 1-phosphate (G1P). The G1P thus generated is used as the glycerophosphate backbone of phospholipids in the cellular membranes of Archaea. Is also able to catalyze the reverse reaction, i.e. the NAD(+)-dependent oxidation of G1P but not of G3P. Is not active toward glycerol, dihydroxyacetone, glyceraldehyde phosphate, and glycerol-2-phosphate. In Aeropyrum pernix (strain ATCC 700893 / DSM 11879 / JCM 9820 / NBRC 100138 / K1), this protein is Glycerol-1-phosphate dehydrogenase [NAD(P)+] (egsA).